The chain runs to 474 residues: Protein anachronism (474 aa).

Residues Met-1 to Ala-33 form the signal peptide. 5 N-linked (GlcNAc...) asparagine glycosylation sites follow: Asn-54, Asn-62, Asn-73, Asn-116, and Asn-144. A disordered region spans residues Asn-173–Pro-195. Residues Gly-183–Pro-195 show a composition bias toward polar residues. N-linked (GlcNAc...) asparagine glycosylation is present at Asn-342. The segment covering Phe-359–Asn-372 has biased composition (polar residues). Residues Phe-359 to Glu-474 form a disordered region. 2 stretches are compositionally biased toward basic residues: residues Leu-390–His-400 and Asn-437–Glu-474.

Synthesized in some glial cells and secreted.

The protein resides in the secreted. Its function is as follows. Negatively regulates proliferation of neuronal precursor cells, thereby controlling the timing of postembryonic neurogenesis. In Drosophila melanogaster (Fruit fly), this protein is Protein anachronism (ana).